Here is a 393-residue protein sequence, read N- to C-terminus: Chalcone synthase 1 (393 aa).

Cys-166 is a catalytic residue.

This sequence belongs to the thiolase-like superfamily. Chalcone/stilbene synthases family.

The catalysed reaction is (E)-4-coumaroyl-CoA + 3 malonyl-CoA + 3 H(+) = 2',4,4',6'-tetrahydroxychalcone + 3 CO2 + 4 CoA. The protein operates within secondary metabolite biosynthesis; flavonoid biosynthesis. Functionally, the primary product of this enzyme is 4,2',4',6'-tetrahydroxychalcone (also termed naringenin-chalcone or chalcone) which can under specific conditions spontaneously isomerize into naringenin. This is Chalcone synthase 1 (CHS1) from Ruta graveolens (Common rue).